The following is a 259-amino-acid chain: Protein FAM220A (259 aa).

Disordered stretches follow at residues 1 to 44 (MRDR…ADAP) and 131 to 154 (LGGG…RVSR). Residues 138-152 (TDGHRGQCPKGEPRV) show a composition bias toward basic and acidic residues.

As to quaternary structure, interacts with transcriptional activator STAT3; the interaction occurs in both the nucleus and the cytoplasm, is enhanced by IL6 and promotes STAT3 dephosphorylation, leading to negative regulation of STAT3 transcriptional activator activity. Can interact with both unphosphorylated and phosphorylated STAT3 but interacts preferentially with phosphorylated STAT3 in the nucleus. Interacts with protein phosphatase PTPN2/TC45; this promotes interaction of PTPN2 with STAT3, leading to dephosphorylation of STAT3 by PTPN2.

It is found in the nucleus. Its subcellular location is the cytoplasm. It localises to the cytoplasmic vesicle. The protein localises to the secretory vesicle. The protein resides in the acrosome. In terms of biological role, promotes dephosphorylation of transcriptional activator STAT3 by interacting with both STAT3 and protein phosphatase PTPN2. This promotes interaction of PTPN2 with STAT3 and mediates STAT3 dephosphorylation by PTPN2, leading to negative regulation of STAT3 transcriptional activator activity. May be required for spermiogenesis or sperm function. The protein is Protein FAM220A of Homo sapiens (Human).